The sequence spans 178 residues: MSHHPDLSVSLDQLLLRKEVRVRQQGEWLKRHSLPLVSFTVNMPGAFKLNAASQTVMDAGMRAIQELCQKTGWRQVACQLLVEKTGPEAFVVIQAPSASMLKKAMMKIEREHPLGRLMDLDVIDVDGHIISRQGAQLPRRRCLLCERDAVICARSRRHSVEALLAKIEEMTHDYSCCA.

It belongs to the CitX family.

The catalysed reaction is apo-[citrate lyase ACP] + 2'-(5''-triphospho-alpha-D-ribosyl)-3'-dephospho-CoA = holo-[citrate lyase ACP] + diphosphate. Functionally, transfers 2-(5''-triphosphoribosyl)-3'-dephosphocoenzyme-A on a serine residue to the apo-acyl carrier protein (gamma chain) of the citrate lyase to yield holo-acyl carrier protein. This is Probable apo-citrate lyase phosphoribosyl-dephospho-CoA transferase from Vibrio cholerae serotype O1 (strain ATCC 39541 / Classical Ogawa 395 / O395).